The sequence spans 510 residues: Hyaluronidase PH-20 (510 aa).

The signal sequence occupies residues 1-35 (MGVLKFKHIFFRSFVKSSGVSQIVFTFLLIPCCLT). Cystine bridges form between C60–C351 and C224–C238. Residue N82 is glycosylated (N-linked (GlcNAc...) asparagine). E148 serves as the catalytic Proton donor. N-linked (GlcNAc...) asparagine glycosylation is found at N166, N235, N254, and N368. Disulfide bonds link C376–C387, C381–C435, and C437–C464. 3 N-linked (GlcNAc...) asparagine glycosylation sites follow: N393, N440, and N484. S491 carries GPI-anchor amidated serine lipidation. The propeptide at 492–510 (TTMFIVNILFLIISSVASL) is removed in mature form.

This sequence belongs to the glycosyl hydrolase 56 family. In terms of tissue distribution, testis.

It is found in the cell membrane. The enzyme catalyses Random hydrolysis of (1-&gt;4)-linkages between N-acetyl-beta-D-glucosamine and D-glucuronate residues in hyaluronate.. Its function is as follows. Involved in sperm-egg adhesion. Upon fertilization sperm must first penetrate a layer of cumulus cells that surrounds the egg before reaching the zona pellucida. The cumulus cells are embedded in a matrix containing hyaluronic acid which is formed prior to ovulation. This protein aids in penetrating the layer of cumulus cells by digesting hyaluronic acid. The protein is Hyaluronidase PH-20 (SPAM1) of Macaca fascicularis (Crab-eating macaque).